Here is a 129-residue protein sequence, read N- to C-terminus: Glycine cleavage system H protein (129 aa).

Residues 24–106 (EAVVGITEHA…YGAGWLFRIK (83 aa)) enclose the Lipoyl-binding domain. Residue Lys65 is modified to N6-lipoyllysine.

This sequence belongs to the GcvH family. In terms of assembly, the glycine cleavage system is composed of four proteins: P, T, L and H. (R)-lipoate is required as a cofactor.

Functionally, the glycine cleavage system catalyzes the degradation of glycine. The H protein shuttles the methylamine group of glycine from the P protein to the T protein. The polypeptide is Glycine cleavage system H protein (Aeromonas hydrophila subsp. hydrophila (strain ATCC 7966 / DSM 30187 / BCRC 13018 / CCUG 14551 / JCM 1027 / KCTC 2358 / NCIMB 9240 / NCTC 8049)).